The primary structure comprises 219 residues: Uracil-DNA glycosylase (219 aa).

D61 functions as the Proton acceptor in the catalytic mechanism.

The protein belongs to the uracil-DNA glycosylase (UDG) superfamily. UNG family.

The protein localises to the cytoplasm. It catalyses the reaction Hydrolyzes single-stranded DNA or mismatched double-stranded DNA and polynucleotides, releasing free uracil.. Functionally, excises uracil residues from the DNA which can arise as a result of misincorporation of dUMP residues by DNA polymerase or due to deamination of cytosine. This is Uracil-DNA glycosylase from Neisseria meningitidis serogroup C (strain 053442).